The following is a 306-amino-acid chain: Pantothenate kinase (306 aa).

An ATP-binding site is contributed by 91-98; that stretch reads GSVAVGKS.

The protein belongs to the prokaryotic pantothenate kinase family.

It localises to the cytoplasm. It carries out the reaction (R)-pantothenate + ATP = (R)-4'-phosphopantothenate + ADP + H(+). It participates in cofactor biosynthesis; coenzyme A biosynthesis; CoA from (R)-pantothenate: step 1/5. This is Pantothenate kinase from Streptococcus equi subsp. zooepidemicus (strain MGCS10565).